Here is a 166-residue protein sequence, read N- to C-terminus: Transcriptional repressor NrdR (166 aa).

Residues 3 to 34 (CPFCGFSDSRVLDSRPTVEGNSIRRRRECCGC) fold into a zinc finger. Positions 49-139 (LIVVKKDGRR…VYREFRDAES (91 aa)) constitute an ATP-cone domain.

Belongs to the NrdR family. It depends on Zn(2+) as a cofactor.

Functionally, negatively regulates transcription of bacterial ribonucleotide reductase nrd genes and operons by binding to NrdR-boxes. This is Transcriptional repressor NrdR from Pelotomaculum thermopropionicum (strain DSM 13744 / JCM 10971 / SI).